The primary structure comprises 568 residues: PWWP domain-containing protein2 (568 aa).

Basic and acidic residues predominate over residues Met-1–Glu-19. Disordered regions lie at residues Met-1–Gly-126, Gln-213–Lys-340, and Ile-465–Lys-568. Over residues Met-29–Gly-46 the composition is skewed to polar residues. Basic and acidic residues-rich tracts occupy residues Glu-48–Glu-88 and Lys-100–Asn-122. The 65-residue stretch at Pro-125 to Glu-189 folds into the PWWP domain. Positions Ser-214–Ser-228 are enriched in low complexity. Acidic residues predominate over residues Glu-229 to Tyr-249. Residues Arg-255 to Thr-266 show a composition bias toward basic residues. Polar residues predominate over residues Leu-281 to Ala-292. The span at Lys-325–Glu-336 shows a compositional bias: acidic residues. Basic and acidic residues-rich tracts occupy residues Lys-489 to Ala-500 and Asp-514 to Ala-541.

This chain is PWWP domain-containing protein2 (pdp2), found in Schizosaccharomyces pombe (strain 972 / ATCC 24843) (Fission yeast).